Reading from the N-terminus, the 490-residue chain is AP-5 complex subunit mu-1 (490 aa).

Residues 206-476 (KPQVSISITE…LISSDYYIWN (271 aa)) enclose the MHD domain.

It belongs to the adaptor complexes medium subunit family. Probably part of the adaptor protein complex 5 (AP-5) a tetramer composed of AP5B1, AP5M1, AP5S1 and AP5Z1. Expressed in various tumor cell lines including Jurkat, Hep-G2 and HeLa.

The protein resides in the cytoplasm. It localises to the cytosol. Its subcellular location is the late endosome membrane. The protein localises to the lysosome membrane. As part of AP-5, a probable fifth adaptor protein complex it may be involved in endosomal transport. According to PubMed:18395520, it may play a role in cell death. This is AP-5 complex subunit mu-1 (AP5M1) from Homo sapiens (Human).